A 320-amino-acid polypeptide reads, in one-letter code: Phospho-N-acetylmuramoyl-pentapeptide-transferase (320 aa).

A run of 9 helical transmembrane segments spans residues 5 to 25 (LWAL…LIKF), 51 to 71 (MGGL…GAAY), 76 to 96 (GVVA…IGGI), 124 to 144 (VVIM…IPMI), 145 to 165 (GTIN…VGWS), 176 to 196 (GLLA…AMHM), 198 to 218 (NHII…FLIF), 233 to 255 (LALG…LIWF), and 298 to 318 (WQID…GIFY).

Belongs to the glycosyltransferase 4 family. MraY subfamily. Mg(2+) serves as cofactor.

It localises to the cell membrane. It catalyses the reaction UDP-N-acetyl-alpha-D-muramoyl-L-alanyl-gamma-D-glutamyl-L-lysyl-D-alanyl-D-alanine + di-trans,octa-cis-undecaprenyl phosphate = Mur2Ac(oyl-L-Ala-gamma-D-Glu-L-Lys-D-Ala-D-Ala)-di-trans,octa-cis-undecaprenyl diphosphate + UMP. It participates in cell wall biogenesis; peptidoglycan biosynthesis. Its function is as follows. Catalyzes the initial step of the lipid cycle reactions in the biosynthesis of the cell wall peptidoglycan: transfers peptidoglycan precursor phospho-MurNAc-pentapeptide from UDP-MurNAc-pentapeptide onto the lipid carrier undecaprenyl phosphate, yielding undecaprenyl-pyrophosphoryl-MurNAc-pentapeptide, known as lipid I. This chain is Phospho-N-acetylmuramoyl-pentapeptide-transferase, found in Leuconostoc citreum (strain KM20).